Consider the following 424-residue polypeptide: Serine--tRNA ligase (424 aa).

T231 to E233 lines the L-serine pocket. ATP is bound at residue R262–E264. E285 provides a ligand contact to L-serine. ATP is bound at residue E349–S352. S385 is a binding site for L-serine.

Belongs to the class-II aminoacyl-tRNA synthetase family. Type-1 seryl-tRNA synthetase subfamily. In terms of assembly, homodimer. The tRNA molecule binds across the dimer.

The protein localises to the cytoplasm. It carries out the reaction tRNA(Ser) + L-serine + ATP = L-seryl-tRNA(Ser) + AMP + diphosphate + H(+). The enzyme catalyses tRNA(Sec) + L-serine + ATP = L-seryl-tRNA(Sec) + AMP + diphosphate + H(+). It participates in aminoacyl-tRNA biosynthesis; selenocysteinyl-tRNA(Sec) biosynthesis; L-seryl-tRNA(Sec) from L-serine and tRNA(Sec): step 1/1. Functionally, catalyzes the attachment of serine to tRNA(Ser). Is also able to aminoacylate tRNA(Sec) with serine, to form the misacylated tRNA L-seryl-tRNA(Sec), which will be further converted into selenocysteinyl-tRNA(Sec). The chain is Serine--tRNA ligase from Bacillus cereus (strain B4264).